The chain runs to 322 residues: tRNA-specific adenosine deaminase subunit TAD3 (322 aa).

Residues 162 to 283 (EVRNELSRAS…EMQRTGSLKL (122 aa)) enclose the CMP/dCMP-type deaminase domain. The Zn(2+) site is built by histidine 216, cysteine 254, cysteine 257, and cysteine 322.

Belongs to the cytidine and deoxycytidylate deaminase family. ADAT3 subfamily. Heterodimer with TAD2.

Its subcellular location is the cytoplasm. The protein localises to the nucleus. It localises to the peroxisome. Structural subunit of tRNA-specific adenosine deaminase, which deaminates adenosine-34 (the first, also called wobble position of the anticodon) to inosine in many tRNAs. Inosine-34 allows the decoding of 3 different nucleotides at the third position of mRNA codons, as inosine is able to pair with U, C, and A. The protein is tRNA-specific adenosine deaminase subunit TAD3 (TAD3) of Saccharomyces cerevisiae (strain ATCC 204508 / S288c) (Baker's yeast).